The following is a 329-amino-acid chain: Sex comb on midleg-like protein 1 (329 aa).

A phosphoserine mark is found at S138 and S238. The region spanning 258 to 325 (WSVEAVVLFL…YYIDRLKQGK (68 aa)) is the SAM domain.

It belongs to the SCM family.

It is found in the nucleus. Putative Polycomb group (PcG) protein. PcG proteins act by forming multiprotein complexes, which are required to maintain the transcriptionally repressive state of homeotic genes throughout development. May be involved in spermatogenesis during sexual maturation. This Hoolock hoolock (Western hoolock gibbon) protein is Sex comb on midleg-like protein 1 (SCML1).